The chain runs to 139 residues: MYRSTLPKRARVLKRRQFLYISRAGSRCQGSQVIFHVAPSKYPGCCKLGITVSKKFGKANKRNYFKRIVREAFRLKRHSLPSCQIVVMPKNKHRPKFEELLQDFTQQIPEALNSKFSKNKSTIGGEYSPKNEQCESELP.

Residues Phe116–Pro139 are disordered.

It belongs to the RnpA family. Consists of a catalytic RNA component (M1 or rnpB) and a protein subunit.

It catalyses the reaction Endonucleolytic cleavage of RNA, removing 5'-extranucleotides from tRNA precursor.. In terms of biological role, RNaseP catalyzes the removal of the 5'-leader sequence from pre-tRNA to produce the mature 5'-terminus. It can also cleave other RNA substrates such as 4.5S RNA. The protein component plays an auxiliary but essential role in vivo by binding to the 5'-leader sequence and broadening the substrate specificity of the ribozyme. This Chlamydia abortus (strain DSM 27085 / S26/3) (Chlamydophila abortus) protein is Ribonuclease P protein component.